A 418-amino-acid polypeptide reads, in one-letter code: tRNA wybutosine-synthesizing protein 2 (418 aa).

S-adenosyl-L-methionine contacts are provided by residues S228, K235, 275–276 (EI), and 302–303 (EN).

It belongs to the class I-like SAM-binding methyltransferase superfamily. TRM5/TYW2 family.

It is found in the cytoplasm. Its subcellular location is the nucleus. The enzyme catalyses 4-demethylwyosine(37) in tRNA(Phe) + S-adenosyl-L-methionine = 4-demethyl-7-[(3S)-3-amino-3-carboxypropyl]wyosine(37) in tRNA(Phe) + S-methyl-5'-thioadenosine + H(+). Its pathway is tRNA modification; wybutosine-tRNA(Phe) biosynthesis. Its function is as follows. S-adenosyl-L-methionine-dependent transferase that acts as a component of the wybutosine biosynthesis pathway. Wybutosine is a hyper modified guanosine with a tricyclic base found at the 3'-position adjacent to the anticodon of eukaryotic phenylalanine tRNA. Catalyzes the transfer of the alpha-amino-alpha-carboxypropyl (acp) group from S-adenosyl-L-methionine to the C-7 position of 4-demethylwyosine (imG-14) to produce wybutosine-86. This is tRNA wybutosine-synthesizing protein 2 (trm12) from Schizosaccharomyces pombe (strain 972 / ATCC 24843) (Fission yeast).